The primary structure comprises 271 residues: uncharacterized protein (271 aa).

Residues 1–202 (MLNSPGTRRP…APSSALSHQG (202 aa)) form a disordered region. Residues 10–23 (PVKEAQKYGEDSQK) are compositionally biased toward basic and acidic residues. Low complexity-rich tracts occupy residues 33–50 (RSSV…SSSP) and 59–73 (GRPS…TSAP). The segment covering 92–101 (TRSSANQLPQ) has biased composition (polar residues). Positions 121 to 142 (LRRRSHGDRCVPRSRRRPRPRP) are enriched in basic residues.

This is an uncharacterized protein from Homo sapiens (Human).